A 321-amino-acid polypeptide reads, in one-letter code: Viral T-cell receptor beta chain-like T17T-22 (321 aa).

The signal sequence occupies residues 1–28 (MISWLPSVAMGSRLLCCVALCLLGAGPA). Positions 29 to 122 (DSGLTQTPRH…DSALYLCASS (94 aa)) are v segment. N-linked (GlcNAc...) asparagine; by host glycosylation is present at Asn105. Residues 123–128 (PNEDSE) are d segment. Residues 129–144 (YGETLYFGEGSRLTVV) are j segment. Residues 145–321 (EDLKKVSPPK…LMAKVKRKDS (177 aa)) are c region. 2 N-linked (GlcNAc...) asparagine; by host glycosylation sites follow: Asn214 and Asn264.

The protein is Viral T-cell receptor beta chain-like T17T-22 (V-TCR) of Feline leukemia virus.